Reading from the N-terminus, the 240-residue chain is Endo-chitosanase B (240 aa).

Positions 1 to 17 are cleaved as a signal peptide; it reads MRLSEILAVALVTGATA. Asn86 is a glycosylation site (N-linked (GlcNAc...) asparagine).

The protein belongs to the glycosyl hydrolase 75 family.

The protein resides in the secreted. The enzyme catalyses Endohydrolysis of beta-(1-&gt;4)-linkages between D-glucosamine residues in a partly acetylated chitosan.. In terms of biological role, chitosanase catalyzing the endo-type cleavage of chitosan, the deacylated form of chitin. Chitosanase may be crucial in the degradation of the deacetylated portion of chitin in the fungal cell wall. Chitoolisaccharides produced by the hydrolysis of partially N-acetylated chitosan are known to have many biological activities, including antibacterial activity, immune-enhancing effects, and elicitor activity. This is Endo-chitosanase B (csnB) from Aspergillus oryzae (Yellow koji mold).